The sequence spans 331 residues: Fructose-1,6-bisphosphatase class 1 2 (331 aa).

Positions 80, 98, 100, and 101 each coordinate Mg(2+). Substrate-binding positions include Asp-101–Ser-104 and Asn-189. Glu-261 contacts Mg(2+).

It belongs to the FBPase class 1 family. As to quaternary structure, homotetramer. Mg(2+) is required as a cofactor.

Its subcellular location is the cytoplasm. It catalyses the reaction beta-D-fructose 1,6-bisphosphate + H2O = beta-D-fructose 6-phosphate + phosphate. Its pathway is carbohydrate biosynthesis; Calvin cycle. This Cereibacter sphaeroides (strain ATCC 17023 / DSM 158 / JCM 6121 / CCUG 31486 / LMG 2827 / NBRC 12203 / NCIMB 8253 / ATH 2.4.1.) (Rhodobacter sphaeroides) protein is Fructose-1,6-bisphosphatase class 1 2.